The following is a 424-amino-acid chain: Serine--tRNA ligase (424 aa).

230–232 (TAE) provides a ligand contact to L-serine. 261 to 263 (RSE) contributes to the ATP binding site. An L-serine-binding site is contributed by Glu-284. Residue 348-351 (EISS) coordinates ATP. Ser-384 lines the L-serine pocket.

This sequence belongs to the class-II aminoacyl-tRNA synthetase family. Type-1 seryl-tRNA synthetase subfamily. In terms of assembly, homodimer. The tRNA molecule binds across the dimer.

It localises to the cytoplasm. The enzyme catalyses tRNA(Ser) + L-serine + ATP = L-seryl-tRNA(Ser) + AMP + diphosphate + H(+). The catalysed reaction is tRNA(Sec) + L-serine + ATP = L-seryl-tRNA(Sec) + AMP + diphosphate + H(+). It functions in the pathway aminoacyl-tRNA biosynthesis; selenocysteinyl-tRNA(Sec) biosynthesis; L-seryl-tRNA(Sec) from L-serine and tRNA(Sec): step 1/1. Its function is as follows. Catalyzes the attachment of serine to tRNA(Ser). Is also able to aminoacylate tRNA(Sec) with serine, to form the misacylated tRNA L-seryl-tRNA(Sec), which will be further converted into selenocysteinyl-tRNA(Sec). The chain is Serine--tRNA ligase from Desulfatibacillum aliphaticivorans.